Here is a 260-residue protein sequence, read N- to C-terminus: Indole-3-glycerol phosphate synthase (260 aa).

It belongs to the TrpC family.

The enzyme catalyses 1-(2-carboxyphenylamino)-1-deoxy-D-ribulose 5-phosphate + H(+) = (1S,2R)-1-C-(indol-3-yl)glycerol 3-phosphate + CO2 + H2O. The protein operates within amino-acid biosynthesis; L-tryptophan biosynthesis; L-tryptophan from chorismate: step 4/5. The chain is Indole-3-glycerol phosphate synthase from Staphylococcus aureus (strain Mu3 / ATCC 700698).